Reading from the N-terminus, the 277-residue chain is Large ribosomal subunit protein uL2 (277 aa).

Residues 222-277 form a disordered region; the sequence is GVTMNPVDHPHGGGEGRTSGGRHPVTPWGKPTKGKKTRSNKSTNKFILISRHKRKK.

This sequence belongs to the universal ribosomal protein uL2 family. As to quaternary structure, part of the 50S ribosomal subunit. Forms a bridge to the 30S subunit in the 70S ribosome.

In terms of biological role, one of the primary rRNA binding proteins. Required for association of the 30S and 50S subunits to form the 70S ribosome, for tRNA binding and peptide bond formation. It has been suggested to have peptidyltransferase activity; this is somewhat controversial. Makes several contacts with the 16S rRNA in the 70S ribosome. The chain is Large ribosomal subunit protein uL2 from Rhodopseudomonas palustris (strain BisB18).